The primary structure comprises 124 residues: Large ribosomal subunit protein uL14 (124 aa).

Belongs to the universal ribosomal protein uL14 family. As to quaternary structure, part of the 50S ribosomal subunit. Forms a cluster with proteins L3 and L19. In the 70S ribosome, L14 and L19 interact and together make contacts with the 16S rRNA in bridges B5 and B8.

Functionally, binds to 23S rRNA. Forms part of two intersubunit bridges in the 70S ribosome. The polypeptide is Large ribosomal subunit protein uL14 (Clostridium novyi (strain NT)).